The chain runs to 146 residues: MNLTDYVKTVSIEDFGWKFKHQALWNKRLRTTGGRFFPKDGHLDFNPKLYEEHGLETFRKIVRHELCHYHLYFQGKGCKHGDRDFKDLLARVDGLRYAPKMRNQAENYFLYQCQSCGHTYRRKRRVNTQKFGCGLCQGKLIFLNQS.

The 136-residue stretch at 6–141 folds into the SprT-like domain; the sequence is YVKTVSIEDF…GCGLCQGKLI (136 aa). Position 64 (His-64) interacts with Zn(2+). Residue Glu-65 is part of the active site. Residue His-68 participates in Zn(2+) binding.

It belongs to the SprT family. It depends on Zn(2+) as a cofactor.

It localises to the cytoplasm. The chain is Protein SprT-like from Streptococcus thermophilus (strain CNRZ 1066).